The primary structure comprises 42 residues: Delta-actitoxin-Ael2d (42 aa).

Cystine bridges form between Cys-4–Cys-37, Cys-6–Cys-30, and Cys-20–Cys-38.

Belongs to the sea anemone type 3 (BDS) potassium channel toxin family.

It localises to the secreted. It is found in the nematocyst. Binds to voltage-gated sodium channels (Nav), and slows down the inactivation of mammalian Nav1.2/SCN2A, Nav1.3/SCN3A Nav1.4/SCN4A, Nav1.6/SCN8A, insect DmNav1 and BgNav1 channels, and arachnid VdNav1 channel. This toxin acts by binding to site 3 of sodium channels. The protein is Delta-actitoxin-Ael2d of Anthopleura elegantissima (Green aggregating anemone).